The primary structure comprises 288 residues: Pirin-like protein CC_3178 (288 aa).

It belongs to the pirin family.

The sequence is that of Pirin-like protein CC_3178 from Caulobacter vibrioides (strain ATCC 19089 / CIP 103742 / CB 15) (Caulobacter crescentus).